A 264-amino-acid chain; its full sequence is 3-methyl-2-oxobutanoate hydroxymethyltransferase (264 aa).

Mg(2+) is bound by residues D45 and D84. Residues 45 to 46 (DS), D84, and K112 contribute to the 3-methyl-2-oxobutanoate site. E114 is a binding site for Mg(2+). The active-site Proton acceptor is E181.

Belongs to the PanB family. In terms of assembly, homodecamer; pentamer of dimers. The cofactor is Mg(2+).

The protein localises to the cytoplasm. The enzyme catalyses 3-methyl-2-oxobutanoate + (6R)-5,10-methylene-5,6,7,8-tetrahydrofolate + H2O = 2-dehydropantoate + (6S)-5,6,7,8-tetrahydrofolate. It participates in cofactor biosynthesis; (R)-pantothenate biosynthesis; (R)-pantoate from 3-methyl-2-oxobutanoate: step 1/2. Catalyzes the reversible reaction in which hydroxymethyl group from 5,10-methylenetetrahydrofolate is transferred onto alpha-ketoisovalerate to form ketopantoate. In Shigella dysenteriae serotype 1 (strain Sd197), this protein is 3-methyl-2-oxobutanoate hydroxymethyltransferase.